The chain runs to 200 residues: Small ribosomal subunit protein uS4 (200 aa).

A disordered region spans residues 22–42; sequence TGKELQKRPYPPGQHGPGQRR. The S4 RNA-binding domain maps to 92 to 152; it reads SRLDNLVYRL…EKSRNLQVIK (61 aa).

The protein belongs to the universal ribosomal protein uS4 family. In terms of assembly, part of the 30S ribosomal subunit. Contacts protein S5. The interaction surface between S4 and S5 is involved in control of translational fidelity.

Functionally, one of the primary rRNA binding proteins, it binds directly to 16S rRNA where it nucleates assembly of the body of the 30S subunit. In terms of biological role, with S5 and S12 plays an important role in translational accuracy. This Geobacillus kaustophilus (strain HTA426) protein is Small ribosomal subunit protein uS4.